Here is a 142-residue protein sequence, read N- to C-terminus: Large ribosomal subunit protein uL11 (142 aa).

The protein belongs to the universal ribosomal protein uL11 family. In terms of assembly, part of the ribosomal stalk of the 50S ribosomal subunit. Interacts with L10 and the large rRNA to form the base of the stalk. L10 forms an elongated spine to which L12 dimers bind in a sequential fashion forming a multimeric L10(L12)X complex. One or more lysine residues are methylated.

Functionally, forms part of the ribosomal stalk which helps the ribosome interact with GTP-bound translation factors. The sequence is that of Large ribosomal subunit protein uL11 from Pseudoalteromonas translucida (strain TAC 125).